The primary structure comprises 115 residues: NADH-ubiquinone oxidoreductase chain 3 (115 aa).

Transmembrane regions (helical) follow at residues 4–24 (FMALSVNIILSTCLILIAFWL), 55–75 (FFLVAITFLLFDLEIALLLPL), and 87–107 (MMLTAFILVSILALGLAYEWV).

The protein belongs to the complex I subunit 3 family. Core subunit of respiratory chain NADH dehydrogenase (Complex I) which is composed of 45 different subunits. Interacts with TMEM186. Interacts with TMEM242.

It is found in the mitochondrion inner membrane. It catalyses the reaction a ubiquinone + NADH + 5 H(+)(in) = a ubiquinol + NAD(+) + 4 H(+)(out). In terms of biological role, core subunit of the mitochondrial membrane respiratory chain NADH dehydrogenase (Complex I) which catalyzes electron transfer from NADH through the respiratory chain, using ubiquinone as an electron acceptor. Essential for the catalytic activity of complex I. This chain is NADH-ubiquinone oxidoreductase chain 3, found in Osgoodomys banderanus (Michoacan deer mouse).